Reading from the N-terminus, the 637-residue chain is DNA mismatch repair protein MutL (637 aa).

It belongs to the DNA mismatch repair MutL/HexB family.

This protein is involved in the repair of mismatches in DNA. It is required for dam-dependent methyl-directed DNA mismatch repair. May act as a 'molecular matchmaker', a protein that promotes the formation of a stable complex between two or more DNA-binding proteins in an ATP-dependent manner without itself being part of a final effector complex. The protein is DNA mismatch repair protein MutL of Actinobacillus succinogenes (strain ATCC 55618 / DSM 22257 / CCUG 43843 / 130Z).